The following is a 154-amino-acid chain: 6,7-dimethyl-8-ribityllumazine synthase (154 aa).

5-amino-6-(D-ribitylamino)uracil-binding positions include tryptophan 22, 56 to 58 (SHE), and 80 to 82 (AVI). 85 to 86 (DT) lines the (2S)-2-hydroxy-3-oxobutyl phosphate pocket. The active-site Proton donor is histidine 88. A 5-amino-6-(D-ribitylamino)uracil-binding site is contributed by phenylalanine 113. Arginine 127 serves as a coordination point for (2S)-2-hydroxy-3-oxobutyl phosphate.

This sequence belongs to the DMRL synthase family.

The enzyme catalyses (2S)-2-hydroxy-3-oxobutyl phosphate + 5-amino-6-(D-ribitylamino)uracil = 6,7-dimethyl-8-(1-D-ribityl)lumazine + phosphate + 2 H2O + H(+). It functions in the pathway cofactor biosynthesis; riboflavin biosynthesis; riboflavin from 2-hydroxy-3-oxobutyl phosphate and 5-amino-6-(D-ribitylamino)uracil: step 1/2. Its function is as follows. Catalyzes the formation of 6,7-dimethyl-8-ribityllumazine by condensation of 5-amino-6-(D-ribitylamino)uracil with 3,4-dihydroxy-2-butanone 4-phosphate. This is the penultimate step in the biosynthesis of riboflavin. The protein is 6,7-dimethyl-8-ribityllumazine synthase of Deinococcus geothermalis (strain DSM 11300 / CIP 105573 / AG-3a).